Reading from the N-terminus, the 112-residue chain is Large ribosomal subunit protein uL1 (112 aa).

It belongs to the universal ribosomal protein uL1 family.

The protein is Large ribosomal subunit protein uL1 (rpl-10a) of Caenorhabditis remanei (Caenorhabditis vulgaris).